A 151-amino-acid polypeptide reads, in one-letter code: Endoribonuclease YbeY (151 aa).

Positions 108, 112, and 118 each coordinate Zn(2+).

The protein belongs to the endoribonuclease YbeY family. The cofactor is Zn(2+).

The protein resides in the cytoplasm. Its function is as follows. Single strand-specific metallo-endoribonuclease involved in late-stage 70S ribosome quality control and in maturation of the 3' terminus of the 16S rRNA. In Porphyromonas gingivalis (strain ATCC BAA-308 / W83), this protein is Endoribonuclease YbeY.